The following is a 152-amino-acid chain: Cell division protein SepF (152 aa).

Belongs to the SepF family. Homodimer. Interacts with FtsZ.

Its subcellular location is the cytoplasm. In terms of biological role, cell division protein that is part of the divisome complex and is recruited early to the Z-ring. Probably stimulates Z-ring formation, perhaps through the cross-linking of FtsZ protofilaments. Its function overlaps with FtsA. This chain is Cell division protein SepF, found in Listeria monocytogenes serotype 4b (strain CLIP80459).